The following is a 464-amino-acid chain: Argininosuccinate lyase (464 aa).

This sequence belongs to the lyase 1 family. Argininosuccinate lyase subfamily.

The protein resides in the cytoplasm. It catalyses the reaction 2-(N(omega)-L-arginino)succinate = fumarate + L-arginine. The protein operates within amino-acid biosynthesis; L-arginine biosynthesis; L-arginine from L-ornithine and carbamoyl phosphate: step 3/3. The protein is Argininosuccinate lyase of Janthinobacterium sp. (strain Marseille) (Minibacterium massiliensis).